A 317-amino-acid chain; its full sequence is Melanocyte-stimulating hormone receptor (317 aa).

Residues M1–E37 lie on the Extracellular side of the membrane. N29 is a glycosylation site (N-linked (GlcNAc...) asparagine). Residues V38–I63 form a helical membrane-spanning segment. The Cytoplasmic portion of the chain corresponds to A64–S72. The chain crosses the membrane as a helical span at residues M73–L93. The Extracellular segment spans residues E94–N118. Residues T119–V140 traverse the membrane as a helical segment. The Cytoplasmic portion of the chain corresponds to D141–R163. Residues V164–Y183 traverse the membrane as a helical segment. Residues D184–C191 are Extracellular-facing. The helical transmembrane segment at L192–L211 threads the bilayer. At A212–A240 the chain is on the cytoplasmic side. The helical transmembrane segment at A241 to F266 threads the bilayer. Residues C267–N279 are Extracellular-facing. A helical transmembrane segment spans residues F280 to F300. Residues R301–W317 are Cytoplasmic-facing. C315 carries the S-palmitoyl cysteine lipid modification.

Belongs to the G-protein coupled receptor 1 family. As to quaternary structure, interacts with MGRN1, but does not undergo MGRN1-mediated ubiquitination; this interaction competes with GNAS-binding and thus inhibits agonist-induced cAMP production. Interacts with OPN3; the interaction results in a decrease in MC1R-mediated cAMP signaling and ultimately a decrease in melanin production in melanocytes.

It localises to the cell membrane. In terms of biological role, receptor for MSH (alpha, beta and gamma) and ACTH. The activity of this receptor is mediated by G proteins which activate adenylate cyclase. Mediates melanogenesis, the production of eumelanin (black/brown) and phaeomelanin (red/yellow), via regulation of cAMP signaling in melanocytes. The protein is Melanocyte-stimulating hormone receptor (MC1R) of Saguinus imperator (Emperor tamarin).